The following is a 529-amino-acid chain: MAMGNPELRTHFFRSSHEPGIPNSLRFPNGFLVTCGLPWLLLLFSVTIILFHPLRKKSDLPLINPGKGRIGILRGYRSRKTFTTELPRLVADGLSKASAFRIAAPDGVNIVLAPSYAHEIAEHPDLNPGPIAGDEFNSHINGFEVFAQLGTSDVISESVRTRLTRQLTKLTPLLTSETPLLLQSQWKDAPDWVEVSPHETALFILSRLSSLVFVGDDLGRNPDWIRILTSYNTEAFAAAEELNLWPQILRPLIARLKPSCRQLRRYIRDARALLVPVLEQRRHAQSQGDRREYNDAIEWLDETSRSTGQPYDPILSQMLLAIGSFHTSSDLLGQVLLDLCMRPDWKVLVRELRKEIISSLQGEGWDKIALNNLKLMDSVLKESQRLKPASTVTMGRYASREITLSDGTIIPKGSTVFIANVAMRDSNIYPDPDDFVPDRFTTRREKGDSSAYLVSASPEHLGFGLGRHACPGRFFAANELKIVLSHMLMKYDIKLPDNGAVAPSKSGIFLATNPDARICVRRRKEEIVI.

A helical membrane pass occupies residues 31 to 51 (FLVTCGLPWLLLLFSVTIILF). Heme is bound at residue C470.

It belongs to the cytochrome P450 family. The cofactor is heme.

The protein localises to the membrane. It functions in the pathway secondary metabolite biosynthesis; terpenoid biosynthesis. Its function is as follows. Cytochrome P450 monooxygenase; part of the gene cluster B that mediates the biosynthesis of austinol and dehydroaustinol, two fungal meroterpenoids. The first step of the pathway is the synthesis of 3,5-dimethylorsellinic acid by the polyketide synthase ausA. 3,5-dimethylorsellinic acid is then prenylated by the polyprenyl transferase ausN. Further epoxidation by the FAD-dependent monooxygenase ausM and cyclization by the probable terpene cyclase ausL lead to the formation of protoaustinoid A. Protoaustinoid A is then oxidized to spiro-lactone preaustinoid A3 by the combined action of the FAD-binding monooxygenases ausB and ausC, and the dioxygenase ausE. Acid-catalyzed keto-rearrangement and ring contraction of the tetraketide portion of preaustinoid A3 by ausJ lead to the formation of preaustinoid A4. The aldo-keto reductase ausK, with the help of ausH, is involved in the next step by transforming preaustinoid A4 into isoaustinone which is in turn hydroxylated by the P450 monooxygenase ausI to form austinolide. Finally, the cytochrome P450 monooxygenase ausG modifies austinolide to austinol. Austinol can be further modified to dehydroaustinol which forms a diffusible complex with diorcinol that initiates conidiation. Due to genetic rearrangements of the clusters and the subsequent loss of some enzymes, the end products of the Emericella nidulans austinoid biosynthesis clusters are austinol and dehydroaustinol, even if additional enzymes, such as the O-acetyltransferase ausQ and the cytochrome P450 monooxygenase ausR are still functional. This Emericella nidulans (strain FGSC A4 / ATCC 38163 / CBS 112.46 / NRRL 194 / M139) (Aspergillus nidulans) protein is Cytochrome P450 monooxygenase ausG.